Here is a 451-residue protein sequence, read N- to C-terminus: Probable carboxypeptidase PMAA_093910 (451 aa).

The first 19 residues, 1–19 (MKVSSLLPSVLLLVGATRA), serve as a signal peptide directing secretion. The N-linked (GlcNAc...) asparagine glycan is linked to Asn149. Asp171 lines the Zn(2+) pocket. Catalysis depends on Glu203, which acts as the Proton acceptor. Zn(2+) is bound at residue Glu204. Asn354 is a glycosylation site (N-linked (GlcNAc...) asparagine).

It belongs to the peptidase M20A family. It depends on Zn(2+) as a cofactor.

The protein resides in the secreted. The sequence is that of Probable carboxypeptidase PMAA_093910 from Talaromyces marneffei (strain ATCC 18224 / CBS 334.59 / QM 7333) (Penicillium marneffei).